Reading from the N-terminus, the 249-residue chain is NADH-quinone oxidoreductase subunit C (249 aa).

It belongs to the complex I 30 kDa subunit family. NDH-1 is composed of 14 different subunits. Subunits NuoB, C, D, E, F, and G constitute the peripheral sector of the complex.

The protein localises to the cell inner membrane. It catalyses the reaction a quinone + NADH + 5 H(+)(in) = a quinol + NAD(+) + 4 H(+)(out). Functionally, NDH-1 shuttles electrons from NADH, via FMN and iron-sulfur (Fe-S) centers, to quinones in the respiratory chain. The immediate electron acceptor for the enzyme in this species is believed to be ubiquinone. Couples the redox reaction to proton translocation (for every two electrons transferred, four hydrogen ions are translocated across the cytoplasmic membrane), and thus conserves the redox energy in a proton gradient. This is NADH-quinone oxidoreductase subunit C from Xylella fastidiosa (strain M12).